Consider the following 452-residue polypeptide: Zinc finger protein 672 (452 aa).

C2H2-type zinc fingers lie at residues 14–36, 42–64, 70–92, and 99–122; these read YSCS…ERAH, FRCL…RRTH, YICS…LGAH, and CPCR…RRQH. The C2H2-type 5; degenerate zinc-finger motif lies at 128 to 150; the sequence is RRCPLCARTFRQSALLFHQARAH. C2H2-type zinc fingers lie at residues 163–185, 199–221, 227–249, 255–277, 283–305, 311–333, 339–361, 367–389, and 395–417; these read HRCA…ARIH, HQCG…LQTH, FKCP…QRTH, YACG…RRSH, HACA…QRIH, FACP…RRTH, YRCE…RRNH, HKCP…RKTH, and AECA…QRAH.

The protein belongs to the krueppel C2H2-type zinc-finger protein family.

The protein resides in the nucleus. Its function is as follows. May be involved in transcriptional regulation. The protein is Zinc finger protein 672 of Homo sapiens (Human).